Here is a 287-residue protein sequence, read N- to C-terminus: Nucleotide-binding protein Ajs_0902 (287 aa).

10 to 17 (GMSGSGKS) contacts ATP. 59–62 (DVRS) lines the GTP pocket.

Belongs to the RapZ-like family.

Functionally, displays ATPase and GTPase activities. The protein is Nucleotide-binding protein Ajs_0902 of Acidovorax sp. (strain JS42).